We begin with the raw amino-acid sequence, 199 residues long: Molybdenum cofactor guanylyltransferase (199 aa).

Residues 12–14, K25, N53, D71, and D101 contribute to the GTP site; that span reads LAG. Mg(2+) is bound at residue D101.

Belongs to the MobA family. In terms of assembly, monomer. It depends on Mg(2+) as a cofactor.

The protein localises to the cytoplasm. The catalysed reaction is Mo-molybdopterin + GTP + H(+) = Mo-molybdopterin guanine dinucleotide + diphosphate. In terms of biological role, transfers a GMP moiety from GTP to Mo-molybdopterin (Mo-MPT) cofactor (Moco or molybdenum cofactor) to form Mo-molybdopterin guanine dinucleotide (Mo-MGD) cofactor. In Cupriavidus necator (strain ATCC 17699 / DSM 428 / KCTC 22496 / NCIMB 10442 / H16 / Stanier 337) (Ralstonia eutropha), this protein is Molybdenum cofactor guanylyltransferase.